The following is a 348-amino-acid chain: GTPase Obg (348 aa).

Residues 1–160 form the Obg domain; it reads MHFLDQAKIF…MWVWLRLKLL (160 aa). The tract at residues 120 to 145 is disordered; the sequence is RGGDGGRGNASYKTSTNRAPRQHGPG. Residues 161 to 328 form the OBG-type G domain; sequence ADAGLVGLPN…VLDKLLEAIG (168 aa). GTP is bound by residues 167-174, 192-196, 213-216, 280-283, and 309-311; these read GLPNAGKS, FTTLR, DIPG, NKID, and SGA. Positions 174 and 194 each coordinate Mg(2+). A disordered region spans residues 326–348; the sequence is AIGQPEPGPDADEEEKGGDWSPI.

Belongs to the TRAFAC class OBG-HflX-like GTPase superfamily. OBG GTPase family. Monomer. It depends on Mg(2+) as a cofactor.

Its subcellular location is the cytoplasm. In terms of biological role, an essential GTPase which binds GTP, GDP and possibly (p)ppGpp with moderate affinity, with high nucleotide exchange rates and a fairly low GTP hydrolysis rate. Plays a role in control of the cell cycle, stress response, ribosome biogenesis and in those bacteria that undergo differentiation, in morphogenesis control. The protein is GTPase Obg of Sphingopyxis alaskensis (strain DSM 13593 / LMG 18877 / RB2256) (Sphingomonas alaskensis).